A 1342-amino-acid chain; its full sequence is DNA-directed RNA polymerase subunit beta (1342 aa).

Belongs to the RNA polymerase beta chain family. In terms of assembly, the RNAP catalytic core consists of 2 alpha, 1 beta, 1 beta' and 1 omega subunit. When a sigma factor is associated with the core the holoenzyme is formed, which can initiate transcription.

It catalyses the reaction RNA(n) + a ribonucleoside 5'-triphosphate = RNA(n+1) + diphosphate. Its function is as follows. DNA-dependent RNA polymerase catalyzes the transcription of DNA into RNA using the four ribonucleoside triphosphates as substrates. The chain is DNA-directed RNA polymerase subunit beta from Aeromonas salmonicida (strain A449).